The primary structure comprises 128 residues: uncharacterized protein (128 aa).

4 helical membrane-spanning segments follow: residues 2–22, 34–54, 64–84, and 108–128; these read LPFY…LTVL, FLYD…AAVC, LPVL…ALFL, and LGLF…TLFL.

Its subcellular location is the cell membrane. This is an uncharacterized protein from Treponema pallidum (strain Nichols).